A 1097-amino-acid chain; its full sequence is Protease Do-like 7 (1097 aa).

The tract at residues 55 to 243 (VLRTTACRAF…LPLQRVVRAL (189 aa)) is serine protease. One can recognise a PDZ domain in the interval 269–366 (MTFLHKGFDE…RGGQPLSVSV (98 aa)). The active-site Charge relay system is H524. The span at 546–556 (TSSGDGSQNDF) shows a compositional bias: polar residues. Positions 546 to 577 (TSSGDGSQNDFGSEAKKQRVDEDSSDGIAANG) are disordered. Over residues 558 to 567 (SEAKKQRVDE) the composition is skewed to basic and acidic residues. Residue S785 is the Charge relay system of the active site.

Belongs to the peptidase S1C family.

The protein resides in the cytoplasm. Functionally, probable serine protease. This Arabidopsis thaliana (Mouse-ear cress) protein is Protease Do-like 7 (DEGP7).